A 380-amino-acid polypeptide reads, in one-letter code: MAKRDYYEALGVARNASDAEIKKAYRRLAMRYHPDRNPDDKAAEEHFKEIQEAYDVLSDARKRTAYDQFGHAGVGAGASAGPGGHGFEGGSNFGDIFGDVFNDIFGAAAGRGGRRQAYRGADLRYNLDLTLEEAVAGTTAKIRIPTYVACKACEGSGAKPGTSPITCPTCGGHGQVRMQQGFFSLQQTCPRCHGSGQIVDSPCSTCRGEGRVREHKTLSVKIPPGVDTGDRIRLTGEGEAGESGGPPGDLYVQVQIKAHSIFSREGDALHCEVPVSFVAAALGGELDVPTLTGRAKLKIPAGTQSGQVFRLRGKGVSPVRGGSAGDLLCRVMVETPVNLNQEQKELLEKFEASMNRNKKHSPKHHSWLEGVKRFFEDMKF.

The J domain occupies 5-70 (DYYEALGVAR…RKRTAYDQFG (66 aa)). The CR-type zinc finger occupies 137–215 (GTTAKIRIPT…CRGEGRVREH (79 aa)). Zn(2+)-binding residues include cysteine 150, cysteine 153, cysteine 167, cysteine 170, cysteine 189, cysteine 192, cysteine 203, and cysteine 206. CXXCXGXG motif repeat units follow at residues 150–157 (CKACEGSG), 167–174 (CPTCGGHG), 189–196 (CPRCHGSG), and 203–210 (CSTCRGEG). The segment at 222–247 (IPPGVDTGDRIRLTGEGEAGESGGPP) is disordered.

Belongs to the DnaJ family. As to quaternary structure, homodimer. Zn(2+) serves as cofactor.

It is found in the cytoplasm. Participates actively in the response to hyperosmotic and heat shock by preventing the aggregation of stress-denatured proteins and by disaggregating proteins, also in an autonomous, DnaK-independent fashion. Unfolded proteins bind initially to DnaJ; upon interaction with the DnaJ-bound protein, DnaK hydrolyzes its bound ATP, resulting in the formation of a stable complex. GrpE releases ADP from DnaK; ATP binding to DnaK triggers the release of the substrate protein, thus completing the reaction cycle. Several rounds of ATP-dependent interactions between DnaJ, DnaK and GrpE are required for fully efficient folding. Also involved, together with DnaK and GrpE, in the DNA replication of plasmids through activation of initiation proteins. In Nitrosococcus oceani (strain ATCC 19707 / BCRC 17464 / JCM 30415 / NCIMB 11848 / C-107), this protein is Chaperone protein DnaJ.